A 695-amino-acid polypeptide reads, in one-letter code: Follicle-stimulating hormone receptor (695 aa).

The first 17 residues, 1-17 (MALLLVSLLAFMSLGSG), serve as a signal peptide directing secretion. Cystine bridges form between cysteine 18-cysteine 25 and cysteine 23-cysteine 32. The 29-residue stretch at 18–46 (CHHRLCHCSNRVFLCQESKVTEIPSDLPR) folds into the LRRNT domain. At 18-366 (CHHRLCHCSN…EDIMGYNILR (349 aa)) the chain is on the extracellular side. 9 LRR repeats span residues 49–72 (VELR…FGDL), 73–97 (EKIE…LPNL), 98–118 (HEIR…AFQN), 119–143 (LPNL…KIQS), 144–169 (LQKV…LGLS), 170–192 (SESV…AFNG), 193–216 (TQLD…VFQG), 217–240 (ASGP…GLEN), and 241–259 (LKKL…PSLE). 2 N-linked (GlcNAc...) asparagine glycosylation sites follow: asparagine 191 and asparagine 199. Disulfide bonds link cysteine 275/cysteine 346, cysteine 276/cysteine 292, cysteine 276/cysteine 356, and cysteine 292/cysteine 338. N-linked (GlcNAc...) asparagine glycosylation occurs at asparagine 293. Tyrosine 335 carries the post-translational modification Sulfotyrosine. A helical transmembrane segment spans residues 367–387 (VLIWFISILAITGNVAVLVVL). The Cytoplasmic portion of the chain corresponds to 388-398 (TTSQYKLTVPR). The helical transmembrane segment at 399-421 (FLMCNLAFADLCIGIYLLLIASV) threads the bilayer. The Extracellular segment spans residues 422–443 (DVHTRTLYHNYAIDWQTGAGCA). A disulfide bridge links cysteine 442 with cysteine 517. A helical transmembrane segment spans residues 444 to 465 (DCWLFTVFASELSVYTLTAITL). At 466 to 485 (ERWHTITHAMQLDCKVQLRH) the chain is on the cytoplasmic side. A helical transmembrane segment spans residues 486 to 508 (AASIMVIGWIFSSAAALFPIFGV). The Extracellular portion of the chain corresponds to 509 to 528 (SSYMKVSICLPMDIDSPLSQ). Residues 529–550 (LYVMFLLVLNVLAFVVICGCYL) traverse the membrane as a helical segment. Residues 551-573 (HIYLTVRNPNIVSSASDTRIAKR) are Cytoplasmic-facing. A helical transmembrane segment spans residues 574–597 (MATLIFTDFLCMAPISFFAISASL). Topologically, residues 598-608 (KVPLITVSKAK) are extracellular. Residues 609-630 (ILLVLFYPINSCANPFLYAIFT) form a helical membrane-spanning segment. Residues 631–695 (KNFRRDLFIL…LAPLNHLAQN (65 aa)) lie on the Cytoplasmic side of the membrane. The segment at 658–677 (TSSTAHNSHPRNGHSSSVSR) is disordered.

Belongs to the G-protein coupled receptor 1 family. FSH/LSH/TSH subfamily. Homotrimer. Functions as a homotrimer binding the FSH hormone heterodimer composed of CGA and FSHB. Interacts with ARRB2. Interacts with APPL2; interaction is independent of follicle stimulating hormone stimulation. Post-translationally, N-glycosylated; indirectly required for FSH-binding, possibly via a conformational change that allows high affinity binding of hormone. Sulfated.

The protein localises to the cell membrane. G protein-coupled receptor for follitropin, the follicle-stimulating hormone. Through cAMP production activates the downstream PI3K-AKT and ERK1/ERK2 signaling pathways. In Cavia porcellus (Guinea pig), this protein is Follicle-stimulating hormone receptor (FSHR).